The sequence spans 549 residues: Cation/acetate symporter ActP (549 aa).

The next 13 helical transmembrane spans lie at 33–53, 77–97, 103–123, 148–168, 183–203, 206–226, 262–282, 303–323, 355–375, 404–424, 428–448, 464–484, and 493–513; these read WQAI…TYWA, LAIA…ALVF, GLIY…LIAE, ILSA…QMVG, IAVV…GMLA, WVQI…AFMV, ISAL…PHIL, GFMG…IMLV, LFLG…VAGL, VSKI…ILFE, IAFM…PIIL, GGWL…TIWV, and IFPY…GIWF.

The protein belongs to the sodium:solute symporter (SSF) (TC 2.A.21) family.

The protein resides in the cell inner membrane. In terms of biological role, transports acetate. This is Cation/acetate symporter ActP from Salmonella newport (strain SL254).